The sequence spans 250 residues: ANVSFSLSGADSKSYSKFITALRKALPSKEKVSNIPLLLPSASGASRYILMQLSNYDAKAITMAIDVTNVYIMGYLVNSTSYFANESDAKLASQYVFKGSTLVTIPYSGNYERLQNAAGKIREKIPLGFRALDSALTSIFHYDSTAAAAAFLVILQTTAEASRFKYIEGQIIERIPKNEVPSPAALSLENEAWSLLSKQIQLAQTNNGAFRTPVVIIDNKGQRVEITNLASKVQIKDVNSKLLLNKQNIA.

The active site involves Glu-160.

The protein belongs to the ribosome-inactivating protein family. Type 1 RIP subfamily.

The catalysed reaction is Endohydrolysis of the N-glycosidic bond at one specific adenosine on the 28S rRNA.. This chain is Ribosome-inactivating protein luffin-B, found in Luffa aegyptiaca (Sponge gourd).